Consider the following 342-residue polypeptide: Protein-glutamate methylesterase/protein-glutamine glutaminase 3 (342 aa).

One can recognise a Response regulatory domain in the interval 3–120; the sequence is RVLVVEDMPT…SPGFADDARR (118 aa). The residue at position 54 (D54) is a 4-aspartylphosphate. A CheB-type methylesterase domain is found at 152-342; it reads DVPRGRVVAV…ADRLALWLRR (191 aa). Active-site residues include S164, H191, and D285.

Belongs to the CheB family. In terms of processing, phosphorylated by CheA. Phosphorylation of the N-terminal regulatory domain activates the methylesterase activity.

The protein resides in the cytoplasm. The catalysed reaction is [protein]-L-glutamate 5-O-methyl ester + H2O = L-glutamyl-[protein] + methanol + H(+). The enzyme catalyses L-glutaminyl-[protein] + H2O = L-glutamyl-[protein] + NH4(+). Functionally, involved in chemotaxis. Part of a chemotaxis signal transduction system that modulates chemotaxis in response to various stimuli. Catalyzes the demethylation of specific methylglutamate residues introduced into the chemoreceptors (methyl-accepting chemotaxis proteins or MCP) by CheR. Also mediates the irreversible deamidation of specific glutamine residues to glutamic acid. This is Protein-glutamate methylesterase/protein-glutamine glutaminase 3 from Anaeromyxobacter dehalogenans (strain 2CP-C).